Consider the following 175-residue polypeptide: Two-on-two hemoglobin-3 (175 aa).

Heme contacts are provided by Y85 and H98. The tract at residues 153 to 175 (QNEKPKHKPQCACKHAANKPAEE) is disordered.

This sequence belongs to the truncated hemoglobin family. Group II subfamily. In terms of assembly, homodimer when ferric. Interacts with RGLG3 and RGLG4. The cofactor is heme. Expressed ubiquitously, with higher levels in root tissue than in shoot tissue.

Functionally, hemoglobin-like protein that exhibits an unusual concentration-independent binding of O(2) and CO. May promote shoot organogenesis from root explants in vitro. Inhibits RGLG3 and RGLG4 ubiquitination activity. The sequence is that of Two-on-two hemoglobin-3 (GLB3) from Arabidopsis thaliana (Mouse-ear cress).